The sequence spans 320 residues: MPMYQVKSYHGGSAPLRVELPTCMYRLPNVHSKTTSPATDAGHVQETSEPSLQALESRQDDILKRLYELKAAVDGLSKMIHTPDADLDVTNILQADEPVPLTTNALDLNLVLGKDYGALKDIVINANPASPPISLLVLHRLLCERYRVLSTVHTHSSVKNVPENLLKCFGEQARKQSRHEYQLGFTLIWKNVPKTQMKFSVQTMCPIEGEGNIARFLFSLFGQKHSAVNLTLIDSWVDIAMFQLKEGSSKERAAVFRSMNSALGKSPWLVGNELTVADVVLWSVLQQTGDGSGVAPANVQRWLKSCENLVPFSTALQLLK.

The disordered stretch occupies residues 31–52 (HSKTTSPATDAGHVQETSEPSL). Position 36 is a phosphoserine (serine 36). The interaction with PRKN stretch occupies residues 82-162 (TPDADLDVTN…HTHSSVKNVP (81 aa)). The interval 162–225 (PENLLKCFGE…FLFSLFGQKH (64 aa)) is interaction with TP53. The 98-residue stretch at 220-317 (LFGQKHSAVN…NLVPFSTALQ (98 aa)) folds into the GST C-terminal domain.

In terms of assembly, part of the multisynthetase complex (MSC), a multisubunit complex that groups tRNA ligases for Arg (RARS1), Asp (DARS1), Gln (QARS1), Ile (IARS1), Leu (LARS1), Lys (KARS1), Met (MARS1) the bifunctional ligase for Glu and Pro (EPRS1) and the auxiliary subunits AIMP1/p43, AIMP2/p38 and EEF1E1/p18. Interacts (via N-terminus) with KARS1. Interacts with EPRS1. Forms a linear complex that contains MARS1, EEF1E1, EPRS1 and AIMP2 that is at the core of the multisubunit complex. Binds FUBP1 (via C-terminus). Interacts in both its unphosphorylated and phosphorylated forms with p53/TP53 (via N-terminus) in the nucleus following UV irradiation. Interacts (via N-terminus) with PRKN/parkin (via first RING-type domain). Interacts with TARS3. Post-translationally, phosphorylated on serine residues in response to UV irradiation. In terms of processing, ubiquitinated by PRKN, leading to its degradation by the proteasome.

It is found in the cytoplasm. The protein localises to the cytosol. The protein resides in the nucleus. In terms of biological role, required for assembly and stability of the aminoacyl-tRNA synthase complex. Mediates ubiquitination and degradation of FUBP1, a transcriptional activator of MYC, leading to MYC down-regulation which is required for aveolar type II cell differentiation. Blocks MDM2-mediated ubiquitination and degradation of p53/TP53. Functions as a proapoptotic factor. This is Aminoacyl tRNA synthase complex-interacting multifunctional protein 2 (AIMP2) from Cricetulus griseus (Chinese hamster).